A 355-amino-acid polypeptide reads, in one-letter code: MASSTTPVSFLAPPLEQLRHLAEELRSLLPRVRVGEAQETAEEFNREMFWRRLNEAAMKVSGEATVLTTLFSKIPSPSPQETQRICEQVHIATEEVIAAYYTFPKDQGITLRKLVRNAVLDIVDGTAQLLDALLAAPSQSPENGDLISCNSVSVACQQVAEIPKDNKAAALLMLTKSVDLVKDAHEEMEQAVEECDPYCGLLDDSEDNSDSHHNEDGVGLPSNRDSYWSEEDQALITPCLALVRASRASLKKIRILVAENGRKDQVAQLDDIVDISDEISPSVDDLVLSVYPPVCHLTVRITSAKLVSVLIKALEITKASHVSPQPGDSWIPLLINAVDHCMDRIKELTQRAVEL.

At alanine 2 the chain carries N-acetylalanine. 2 interaction with TCF3 regions span residues 2–181 (ASST…VDLV) and 147–355 (ISCN…AVEL). The tract at residues 2-187 (ASSTTPVSFL…VDLVKDAHEE (186 aa)) is interaction with RPLP0. A required for interaction with CCND1 region spans residues 2–205 (ASSTTPVSFL…DPYCGLLDDS (204 aa)). The tract at residues 203–224 (DDSEDNSDSHHNEDGVGLPSNR) is disordered. The interaction with RPLP0 stretch occupies residues 235–355 (LITPCLALVR…KELTQRAVEL (121 aa)).

Belongs to the CCNDBP1 family. In terms of assembly, interacts with CCND1 and GRAP2. May also interact with COPS5, RPLP0, SIRT6, SYF2 and TCF3. In terms of processing, phosphorylated.

It is found in the cytoplasm. The protein localises to the nucleus. May negatively regulate cell cycle progression. May act at least in part via inhibition of the cyclin-D1/CDK4 complex, thereby preventing phosphorylation of RB1 and blocking E2F-dependent transcription. The protein is Cyclin-D1-binding protein 1 (Ccndbp1) of Rattus norvegicus (Rat).